A 214-amino-acid polypeptide reads, in one-letter code: Putative ankyrin repeat protein R844 (214 aa).

5 ANK repeats span residues Val-41 to Phe-70, Ser-81 to Thr-110, Asp-111 to Ala-140, Asn-142 to Ser-170, and Asn-172 to Ala-200.

This Acanthamoeba polyphaga mimivirus (APMV) protein is Putative ankyrin repeat protein R844.